Here is a 512-residue protein sequence, read N- to C-terminus: Maturase K (512 aa).

It belongs to the intron maturase 2 family. MatK subfamily.

The protein resides in the plastid. The protein localises to the chloroplast. In terms of biological role, usually encoded in the trnK tRNA gene intron. Probably assists in splicing its own and other chloroplast group II introns. This chain is Maturase K, found in Alisma canaliculatum (Water plantain).